The following is a 1013-amino-acid chain: Probable outer membrane protein PmpG (1013 aa).

The first 27 residues, 1-27, serve as a signal peptide directing secretion; the sequence is MQTSFHKFFLSMILAYSCCSLSGGGYA. The Autotransporter domain maps to 733–1013; the sequence is GRSYCRGLWV…GLSAGSKVRF (281 aa).

This sequence belongs to the PMP outer membrane protein family.

The protein localises to the secreted. It localises to the cell wall. Its subcellular location is the cell outer membrane. The chain is Probable outer membrane protein PmpG (pmpG) from Chlamydia trachomatis serovar D (strain ATCC VR-885 / DSM 19411 / UW-3/Cx).